Here is a 221-residue protein sequence, read N- to C-terminus: 7-cyano-7-deazaguanine synthase (221 aa).

10–20 is an ATP binding site; sequence FSGGQDSTTCL. Cys-186, Cys-195, Cys-198, and Cys-201 together coordinate Zn(2+).

The protein belongs to the QueC family. As to quaternary structure, homodimer. Zn(2+) is required as a cofactor.

The catalysed reaction is 7-carboxy-7-deazaguanine + NH4(+) + ATP = 7-cyano-7-deazaguanine + ADP + phosphate + H2O + H(+). It functions in the pathway purine metabolism; 7-cyano-7-deazaguanine biosynthesis. Functionally, catalyzes the ATP-dependent conversion of 7-carboxy-7-deazaguanine (CDG) to 7-cyano-7-deazaguanine (preQ(0)). The protein is 7-cyano-7-deazaguanine synthase of Anoxybacillus flavithermus (strain DSM 21510 / WK1).